A 309-amino-acid chain; its full sequence is MILDNFFKNLIYEPVSVLGLLVFYFLLINLPISLGAVFKKKSSFAVRLITILVNLLITLQLLFRWSISGHFPISNLYESLYFLAWGITLGQLLVEREYQAPIIPSIAIPIELLIVSFACFVLPEDLKSSSNLVPALRSSWLVMHVSVVMLSYAALIIGSLLSMSVLFINKNKPLQIRSSSTGIGGFKLSNSYPVNDLVESIEFSHSEELDTLSYRSILIGFVLLTLGLISGAVWANEAWGTWWSWDPKETWAFISWLFYAAYLHMRISKGWQGRKPALLASTGFLVVLVCYLGVNFLGIGLHSYGWIFG.

8 helical membrane passes run 18–38, 43–63, 73–93, 102–122, 148–168, 216–236, 250–267, and 279–299; these read LGLL…GAVF, SFAV…QLLF, ISNL…GQLL, IIPS…CFVL, VMLS…VLFI, SILI…VWAN, TWAF…HMRI, and LAST…FLGI.

Belongs to the CcmF/CycK/Ccl1/NrfE/CcsA family. In terms of assembly, may interact with ccs1.

It localises to the cellular thylakoid membrane. Its function is as follows. Required during biogenesis of c-type cytochromes (cytochrome c6 and cytochrome f) at the step of heme attachment. The sequence is that of Cytochrome c biogenesis protein CcsA from Prochlorococcus marinus (strain MIT 9301).